We begin with the raw amino-acid sequence, 183 residues long: Regulatory protein RecX (183 aa).

Polar residues predominate over residues 1 to 12 (MTSFPHPSTSES). Residues 1–26 (MTSFPHPSTSESGPDPDSEPNREEQA) are disordered.

The protein belongs to the RecX family.

The protein localises to the cytoplasm. Its function is as follows. Modulates RecA activity. The protein is Regulatory protein RecX of Mycobacterium sp. (strain JLS).